Reading from the N-terminus, the 270-residue chain is Co-chaperone protein DjlA (270 aa).

Over 1–6 the chain is Periplasmic; it reads MQYWGK. Residues 7 to 31 traverse the membrane as a helical segment; that stretch reads IIGVAVALMMGGGFWGVVLGLLVGH. At 32–270 the chain is on the cytoplasmic side; sequence MFDKARSRKM…ELIKEQKGFK (239 aa). The J domain maps to 204-270; that stretch reads DACNVLGVKT…ELIKEQKGFK (67 aa).

Homodimer.

Its subcellular location is the cell inner membrane. Regulatory DnaK co-chaperone. Direct interaction between DnaK and DjlA is needed for the induction of the wcaABCDE operon, involved in the synthesis of a colanic acid polysaccharide capsule, possibly through activation of the RcsB/RcsC phosphotransfer signaling pathway. The colanic acid capsule may help the bacterium survive conditions outside the host. This Salmonella paratyphi A (strain ATCC 9150 / SARB42) protein is Co-chaperone protein DjlA.